The chain runs to 156 residues: MAIRRIEGLLHLASEGRYAILVGRFNSFVVEHLLEGAIDTLKRHGVNEDNITVIHAPGAWELPIVAKKLATSNQFDAIIALGAVIRGSTPHFDFVAGECAKGLGVVALESSLPVINGVLTTDSIEQAIERSGTKAGNKGSEAALTAIEMVNLLKAI.

5-amino-6-(D-ribitylamino)uracil contacts are provided by residues phenylalanine 25, 59-61 (AWE), and 83-85 (AVI). 88-89 (ST) contacts (2S)-2-hydroxy-3-oxobutyl phosphate. Histidine 91 serves as the catalytic Proton donor. Asparagine 116 is a 5-amino-6-(D-ribitylamino)uracil binding site. Position 130 (arginine 130) interacts with (2S)-2-hydroxy-3-oxobutyl phosphate.

It belongs to the DMRL synthase family. As to quaternary structure, forms an icosahedral capsid composed of 60 subunits, arranged as a dodecamer of pentamers.

The enzyme catalyses (2S)-2-hydroxy-3-oxobutyl phosphate + 5-amino-6-(D-ribitylamino)uracil = 6,7-dimethyl-8-(1-D-ribityl)lumazine + phosphate + 2 H2O + H(+). It participates in cofactor biosynthesis; riboflavin biosynthesis; riboflavin from 2-hydroxy-3-oxobutyl phosphate and 5-amino-6-(D-ribitylamino)uracil: step 1/2. Its function is as follows. Catalyzes the formation of 6,7-dimethyl-8-ribityllumazine by condensation of 5-amino-6-(D-ribitylamino)uracil with 3,4-dihydroxy-2-butanone 4-phosphate. This is the penultimate step in the biosynthesis of riboflavin. In Acinetobacter baumannii (strain AB0057), this protein is 6,7-dimethyl-8-ribityllumazine synthase.